The primary structure comprises 660 residues: tRNA 5-methylaminomethyl-2-thiouridine biosynthesis bifunctional protein MnmC (660 aa).

The segment at 1–233 (MTHSHAQLVW…KRHISHGWIA (233 aa)) is tRNA (mnm(5)s(2)U34)-methyltransferase. The tract at residues 260–660 (VGGGLAGAAS…IRRKLDPDAL (401 aa)) is FAD-dependent cmnm(5)s(2)U34 oxidoreductase.

This sequence in the N-terminal section; belongs to the methyltransferase superfamily. tRNA (mnm(5)s(2)U34)-methyltransferase family. The protein in the C-terminal section; belongs to the DAO family. Requires FAD as cofactor.

Its subcellular location is the cytoplasm. It catalyses the reaction 5-aminomethyl-2-thiouridine(34) in tRNA + S-adenosyl-L-methionine = 5-methylaminomethyl-2-thiouridine(34) in tRNA + S-adenosyl-L-homocysteine + H(+). Its function is as follows. Catalyzes the last two steps in the biosynthesis of 5-methylaminomethyl-2-thiouridine (mnm(5)s(2)U) at the wobble position (U34) in tRNA. Catalyzes the FAD-dependent demodification of cmnm(5)s(2)U34 to nm(5)s(2)U34, followed by the transfer of a methyl group from S-adenosyl-L-methionine to nm(5)s(2)U34, to form mnm(5)s(2)U34. The polypeptide is tRNA 5-methylaminomethyl-2-thiouridine biosynthesis bifunctional protein MnmC (Chromobacterium violaceum (strain ATCC 12472 / DSM 30191 / JCM 1249 / CCUG 213 / NBRC 12614 / NCIMB 9131 / NCTC 9757 / MK)).